A 389-amino-acid polypeptide reads, in one-letter code: tRNA-specific 2-thiouridylase MnmA (389 aa).

Residues 35–42 (GMSGGVDS) and Met-61 contribute to the ATP site. The interaction with target base in tRNA stretch occupies residues 121 to 123 (NPD). Catalysis depends on Cys-126, which acts as the Nucleophile. Cys-126 and Cys-223 form a disulfide bridge. Gly-151 contributes to the ATP binding site. The segment at 173–175 (KDQ) is interaction with tRNA. The active-site Cysteine persulfide intermediate is the Cys-223. The tract at residues 335–336 (RY) is interaction with tRNA.

The protein belongs to the MnmA/TRMU family.

It localises to the cytoplasm. It carries out the reaction S-sulfanyl-L-cysteinyl-[protein] + uridine(34) in tRNA + AH2 + ATP = 2-thiouridine(34) in tRNA + L-cysteinyl-[protein] + A + AMP + diphosphate + H(+). Functionally, catalyzes the 2-thiolation of uridine at the wobble position (U34) of tRNA, leading to the formation of s(2)U34. The chain is tRNA-specific 2-thiouridylase MnmA from Actinobacillus succinogenes (strain ATCC 55618 / DSM 22257 / CCUG 43843 / 130Z).